Consider the following 705-residue polypeptide: Forkhead box protein P1 (705 aa).

Positions 1 to 19 (MMQESGSETKSNGSAIQNG) are enriched in polar residues. The segment at 1–41 (MMQESGSETKSNGSAIQNGSSGGNHLLECGALRDTRSNGEA) is disordered. Ser113 is subject to Phosphoserine. Disordered regions lie at residues 267–286 (HTAEETTSSNHSSLDLTSTC) and 291–326 (APSKSSLIMNPHASTNGQLSVHTPKRESLSHEEHPH). Composition is skewed to polar residues over residues 276 to 286 (NHSSLDLTSTC) and 291 to 311 (APSKSSLIMNPHASTNGQLSV). Positions 314 to 326 (PKRESLSHEEHPH) are enriched in basic and acidic residues. Lys315 is covalently cross-linked (Glycyl lysine isopeptide (Lys-Gly) (interchain with G-Cter in SUMO2)). The C2H2-type zinc-finger motif lies at 334–359 (GVCKWPGCEAVCDDFPAFLKHLNSEH). Residues 376–397 (VQQLELQLAKDKERLQAMMTHL) are leucine-zipper. Glycyl lysine isopeptide (Lys-Gly) (interchain with G-Cter in SUMO2) cross-links involve residues Lys400 and Lys405. Positions 410-414 (PLNLV) are CTBP1-binding. Over residues 418-431 (TLSKSASEASPQSL) the composition is skewed to polar residues. The disordered stretch occupies residues 418–450 (TLSKSASEASPQSLPHTPTTPTAPLTPVTQGPS). Residues 432-446 (PHTPTTPTAPLTPVT) are compositionally biased toward low complexity. Lys470 participates in a covalent cross-link: Glycyl lysine isopeptide (Lys-Gly) (interchain with G-Cter in SUMO2). Positions 493–583 (RPPFTYASLI…PQKISGNPSL (91 aa)) form a DNA-binding region, fork-head. Positions 639–705 (EHTNSNESDS…EDEPVNEDME (67 aa)) are disordered. A compositionally biased stretch (polar residues) spans 640–651 (HTNSNESDSSPG). Phosphothreonine is present on Thr681. Residue Ser686 is modified to Phosphoserine. The span at 695-705 (YEDEPVNEDME) shows a compositional bias: acidic residues.

As to quaternary structure, forms homodimers and heterodimers with FOXP2 and FOXP4. Dimerization is required for DNA-binding. Self-associates. Interacts with CTBP1. Interacts with NCOR2 and AR. Interacts with FOXP2. Interacts with TBR1. Interacts with AURKA; this interaction facilitates the phosphorylation of FOXP1, which suppresses the expression of FBXL7. Interacts with ZMYM2. Isoform 5 is specifically expressed in embryonic stem cells. Highest expression in the lung, brain, and spleen. Lower expression in heart, skeletal muscle, kidney, small intestine (isoform 3 not present) and liver.

Its subcellular location is the nucleus. Transcriptional repressor. Can act with CTBP1 to synergistically repress transcription but CTPBP1 is not essential. Plays an important role in the specification and differentiation of lung epithelium. Acts cooperatively with FOXP4 to regulate lung secretory epithelial cell fate and regeneration by restricting the goblet cell lineage program; the function may involve regulation of AGR2. Essential transcriptional regulator of B-cell development. Involved in regulation of cardiac muscle cell proliferation. Involved in the columnar organization of spinal motor neurons. Promotes the formation of the lateral motor neuron column (LMC) and the preganglionic motor column (PGC) and is required for respective appropriate motor axon projections. The segment-appropriate generation of spinal cord motor columns requires cooperation with other Hox proteins. Can regulate PITX3 promoter activity; may promote midbrain identity in embryonic stem cell-derived dopamine neurons by regulating PITX3. Negatively regulates the differentiation of T follicular helper cells T(FH)s. Involved in maintenance of hair follicle stem cell quiescence; the function probably involves regulation of FGF18. Represses transcription of various pro-apoptotic genes and cooperates with NF-kappa B-signaling in promoting B-cell expansion by inhibition of caspase-dependent apoptosis. Binds to CSF1R promoter elements and is involved in regulation of monocyte differentiation and macrophage functions; repression of CSF1R in monocytes seems to involve NCOR2 as corepressor. Involved in endothelial cell proliferation, tube formation and migration indicative for a role in angiogenesis; the role in neovascularization seems to implicate suppression of SEMA5B. Can negatively regulate androgen receptor signaling. Acts as a transcriptional activator of the FBXL7 promoter; this activity is regulated by AURKA. Its function is as follows. Involved in transcriptional regulation in embryonic stem cells (ESCs). Stimulates expression of transcription factors that are required for pluripotency and decreases expression of differentiation-associated genes. Has distinct DNA-binding specifities as compared to the canonical form and preferentially binds DNA with the sequence 5'-CGATACAA-3' (or closely related sequences). Promotes ESC self-renewal and pluripotency. The polypeptide is Forkhead box protein P1 (Foxp1) (Mus musculus (Mouse)).